Reading from the N-terminus, the 67-residue chain is Protein AaeX (67 aa).

2 helical membrane passes run 3-23 (LFPV…ELLL) and 43-63 (FVWH…YLIS).

It belongs to the AaeX family.

The protein resides in the cell membrane. This chain is Protein AaeX, found in Escherichia coli (strain K12 / DH10B).